The chain runs to 57 residues: Large ribosomal subunit protein bL32c (57 aa).

The protein belongs to the bacterial ribosomal protein bL32 family.

Its subcellular location is the plastid. It localises to the chloroplast. The sequence is that of Large ribosomal subunit protein bL32c from Amborella trichopoda.